Reading from the N-terminus, the 397-residue chain is Purine ribonucleoside efflux pump NepI (397 aa).

Over 1–21 (MNENIAEKFRADGVARPNWSA) the chain is Cytoplasmic. A helical membrane pass occupies residues 22–42 (VFAVAFCVACLITVEFLPVSL). Residues 43–54 (LTPMAQDLGISE) lie on the Periplasmic side of the membrane. Residues 55-75 (GIAGQSVTVTAFVAMFSSLFI) form a helical membrane-spanning segment. Topologically, residues 76 to 85 (TQIIQATDRR) are cytoplasmic. Residues 86 to 106 (YIVILFAVLLTASCLMVSFAN) form a helical membrane-spanning segment. Position 107 (Ser-107) is a topological domain, periplasmic. The chain crosses the membrane as a helical span at residues 108-128 (FTLLLLGRACLGLALGGFWAM). The Cytoplasmic segment spans residues 129–147 (SASLTMRLVPARTVPKALS). The helical transmembrane segment at 148 to 168 (VIFGAVSIALVIAAPLGSFLG) threads the bilayer. Topologically, residues 169-175 (GIIGWRN) are periplasmic. Residues 176-196 (VFNAAAVMGVLCVIWVVKSLP) form a helical membrane-spanning segment. Residues 197 to 215 (SLPGEPSHQKQNMFSLLQR) are Cytoplasmic-facing. Residues 216–236 (PGVMAGMIAIFMSFAGQFAFF) traverse the membrane as a helical segment. Residues 237–255 (TYIRPVYMNLAGFDVDGLT) are Periplasmic-facing. A helical transmembrane segment spans residues 256-276 (LVLLSFGIASFVGTSFSSYVL). The Cytoplasmic segment spans residues 277 to 281 (KRSVK). A helical transmembrane segment spans residues 282-302 (LALAGAPLLLALSALTLIVWG). Residues 303 to 305 (SDK) are Periplasmic-facing. The helical transmembrane segment at 306 to 326 (TVAAVIAIIWGLAFALVPVGW) threads the bilayer. Residues 327–343 (STWITRSLADQAEKAGS) are Cytoplasmic-facing. A helical transmembrane segment spans residues 344 to 364 (IQVAVIQLANTCGAAVGGYAL). The Periplasmic segment spans residues 365–366 (DN). A helical transmembrane segment spans residues 367-387 (FGLLSPLALSGCLMLLTALVV). The Cytoplasmic segment spans residues 388-397 (AAKVRITPMS).

This sequence belongs to the major facilitator superfamily. DHA1 family. NepI (TC 2.A.1.2.26) subfamily.

It is found in the cell inner membrane. It catalyses the reaction inosine(in) + H(+)(out) = inosine(out) + H(+)(in). It carries out the reaction guanosine(in) + H(+)(out) = guanosine(out) + H(+)(in). In terms of biological role, involved in the efflux of purine ribonucleosides, such as inosine and guanosine. The protein is Purine ribonucleoside efflux pump NepI of Salmonella enteritidis PT4 (strain P125109).